Reading from the N-terminus, the 339-residue chain is Ketol-acid reductoisomerase (NADP(+)) (339 aa).

In terms of domain architecture, KARI N-terminal Rossmann spans 1 to 182 (MRVYYDRDAD…GGGRAGIIET (182 aa)). Residues 24–27 (YGSQ), Arg48, Ser51, Thr53, and 83–86 (DELQ) each bind NADP(+). Residue His108 is part of the active site. Position 134 (Gly134) interacts with NADP(+). Positions 183 to 328 (SFKEECETDL…AKLREMMPWI (146 aa)) constitute a KARI C-terminal knotted domain. Asp191, Glu195, Glu227, and Glu231 together coordinate Mg(2+). A substrate-binding site is contributed by Ser252.

It belongs to the ketol-acid reductoisomerase family. Mg(2+) is required as a cofactor.

It carries out the reaction (2R)-2,3-dihydroxy-3-methylbutanoate + NADP(+) = (2S)-2-acetolactate + NADPH + H(+). The enzyme catalyses (2R,3R)-2,3-dihydroxy-3-methylpentanoate + NADP(+) = (S)-2-ethyl-2-hydroxy-3-oxobutanoate + NADPH + H(+). The protein operates within amino-acid biosynthesis; L-isoleucine biosynthesis; L-isoleucine from 2-oxobutanoate: step 2/4. It functions in the pathway amino-acid biosynthesis; L-valine biosynthesis; L-valine from pyruvate: step 2/4. In terms of biological role, involved in the biosynthesis of branched-chain amino acids (BCAA). Catalyzes an alkyl-migration followed by a ketol-acid reduction of (S)-2-acetolactate (S2AL) to yield (R)-2,3-dihydroxy-isovalerate. In the isomerase reaction, S2AL is rearranged via a Mg-dependent methyl migration to produce 3-hydroxy-3-methyl-2-ketobutyrate (HMKB). In the reductase reaction, this 2-ketoacid undergoes a metal-dependent reduction by NADPH to yield (R)-2,3-dihydroxy-isovalerate. In Rhodopseudomonas palustris (strain BisB5), this protein is Ketol-acid reductoisomerase (NADP(+)).